The sequence spans 49 residues: uncharacterized protein (49 aa).

A helical membrane pass occupies residues 16–36 (WTCHTGFYLMILLVLFFMYGF).

The protein localises to the cell membrane. This is an uncharacterized protein from Bacillus subtilis (strain 168).